The following is a 335-amino-acid chain: DNA-directed RNA polymerase subunit alpha (335 aa).

The tract at residues 1-233 (MMLNATEFLT…QQISIFVDLE (233 aa)) is alpha N-terminal domain (alpha-NTD). Residues 247 to 335 (VDPVLLRPVD…VDDRFSYRSR (89 aa)) form an alpha C-terminal domain (alpha-CTD) region.

It belongs to the RNA polymerase alpha chain family. As to quaternary structure, homodimer. The RNAP catalytic core consists of 2 alpha, 1 beta, 1 beta' and 1 omega subunit. When a sigma factor is associated with the core the holoenzyme is formed, which can initiate transcription.

The enzyme catalyses RNA(n) + a ribonucleoside 5'-triphosphate = RNA(n+1) + diphosphate. DNA-dependent RNA polymerase catalyzes the transcription of DNA into RNA using the four ribonucleoside triphosphates as substrates. This Psychrobacter arcticus (strain DSM 17307 / VKM B-2377 / 273-4) protein is DNA-directed RNA polymerase subunit alpha.